Reading from the N-terminus, the 316-residue chain is Phospho-N-acetylmuramoyl-pentapeptide-transferase (316 aa).

A run of 10 helical transmembrane segments spans residues 5-25 (IILA…LFIP), 49-69 (GTPT…TLIF), 76-96 (LAIL…DDFL), 116-136 (FLLA…EVIF), 141-161 (TTID…VGTV), 172-192 (GLAA…ALFL), 195-212 (ITYG…LGFL), 221-241 (IFMG…AAVL), 244-264 (LPLI…SVII), and 296-316 (VVYA…YSLS).

The protein belongs to the glycosyltransferase 4 family. MraY subfamily. It depends on Mg(2+) as a cofactor.

The protein resides in the cell membrane. It carries out the reaction UDP-N-acetyl-alpha-D-muramoyl-L-alanyl-gamma-D-glutamyl-meso-2,6-diaminopimeloyl-D-alanyl-D-alanine + di-trans,octa-cis-undecaprenyl phosphate = di-trans,octa-cis-undecaprenyl diphospho-N-acetyl-alpha-D-muramoyl-L-alanyl-D-glutamyl-meso-2,6-diaminopimeloyl-D-alanyl-D-alanine + UMP. It functions in the pathway cell wall biogenesis; peptidoglycan biosynthesis. Its function is as follows. Catalyzes the initial step of the lipid cycle reactions in the biosynthesis of the cell wall peptidoglycan: transfers peptidoglycan precursor phospho-MurNAc-pentapeptide from UDP-MurNAc-pentapeptide onto the lipid carrier undecaprenyl phosphate, yielding undecaprenyl-pyrophosphoryl-MurNAc-pentapeptide, known as lipid I. This is Phospho-N-acetylmuramoyl-pentapeptide-transferase from Thermoanaerobacter pseudethanolicus (strain ATCC 33223 / 39E) (Clostridium thermohydrosulfuricum).